Reading from the N-terminus, the 523-residue chain is Sporulation protein 23 (523 aa).

In terms of assembly, interacts with SPO1 in meiosis.

Functionally, regulates expression of PIS1. This Saccharomyces cerevisiae (strain ATCC 204508 / S288c) (Baker's yeast) protein is Sporulation protein 23 (SPO23).